A 1153-amino-acid polypeptide reads, in one-letter code: AP-3 complex subunit delta-1 (1153 aa).

At Ala-2 the chain carries N-acetylalanine. HEAT repeat units follow at residues 34 to 71 (KYIS…LGYD), 77 to 114 (FNII…LTTN), 142 to 179 (DLAR…KYPE), 180 to 216 (SLRP…RNPK), 254 to 292 (RLGK…SLSS), 299 to 336 (ASIQ…THPK), 338 to 373 (VQSH…KKNL), 375 to 409 (EIVK…QSNY), 431 to 468 (TRHG…SAHL), 497 to 535 (QEPH…SILQ), and 548 to 585 (AVTQ…IQKL). 2 disordered regions span residues 629–696 (EPLS…YQDT) and 726–920 (KLEE…PPES). Residues Ser-632, Ser-634, Ser-636, and Ser-658 each carry the phosphoserine modification. The segment covering 639 to 675 (ERPRAVFHEEEQRRPKHRPSEADEEELARRREARKQE) has biased composition (basic and acidic residues). Residues 659-679 (EADEEELARRREARKQEQANN) adopt a coiled-coil conformation. Ser-688 carries the phosphoserine modification. Residues 725–756 (VKLEEERRHRQKLEKDKRRKKRKEKEKKGKRR) are a coiled coil. Positions 726 to 740 (KLEEERRHRQKLEKD) are enriched in basic and acidic residues. Positions 741–758 (KRRKKRKEKEKKGKRRHS) are enriched in basic residues. Ser-758 and Ser-759 each carry phosphoserine. Thr-762 bears the Phosphothreonine mark. Phosphoserine occurs at positions 764, 785, 788, 828, and 829. The span at 777–794 (VTEEMPENALPSDEDDKD) shows a compositional bias: acidic residues. The segment covering 795–839 (PNDPYRALDIDLDKPLADSEKLPIQKHRNTETSKSPEKDVPMVEK) has biased composition (basic and acidic residues). Composition is skewed to basic residues over residues 840–853 (KSKK…KHKE) and 863–879 (EKEK…KHRK). The stretch at 845–869 (KKKEKKHKEKERDKEKKKEKEKKKS) forms a coiled coil. Position 931 is a phosphoserine (Val-931).

It belongs to the adaptor complexes large subunit family. As to quaternary structure, AP-3 associates with the BLOC-1 complex. Adaptor protein complex 3 (AP-3) is a heterotetramer composed of two large adaptins (delta-type subunit AP3D1 and beta-type subunit AP3B1 or AP3B2), a medium adaptin (mu-type subunit AP3M1 or AP3M2) and a small adaptin (sigma-type subunit APS1 or AP3S2). Interacts with SLC30A2. Interacts with CLN3 (via dileucine motif); this interaction facilitates lysosomal targeting. As to expression, present in all adult tissues examined with the highest levels in skeletal muscle, heart, pancreas and testis.

The protein localises to the cytoplasm. The protein resides in the golgi apparatus membrane. In terms of biological role, part of the AP-3 complex, an adaptor-related complex which is not clathrin-associated. The complex is associated with the Golgi region as well as more peripheral structures. It facilitates the budding of vesicles from the Golgi membrane and may be directly involved in trafficking to lysosomes. Involved in process of CD8+ T-cell and NK cell degranulation. In concert with the BLOC-1 complex, AP-3 is required to target cargos into vesicles assembled at cell bodies for delivery into neurites and nerve terminals. The protein is AP-3 complex subunit delta-1 (AP3D1) of Homo sapiens (Human).